The chain runs to 90 residues: uncharacterized protein (90 aa).

2 consecutive transmembrane segments (helical) span residues 17–37 (ILSM…IYLV) and 55–75 (ICFG…WGIA).

It localises to the membrane. This is an uncharacterized protein from Schizosaccharomyces pombe (strain 972 / ATCC 24843) (Fission yeast).